We begin with the raw amino-acid sequence, 148 residues long: UPF0251 protein Cbei_2962 (148 aa).

The protein belongs to the UPF0251 family.

This is UPF0251 protein Cbei_2962 from Clostridium beijerinckii (strain ATCC 51743 / NCIMB 8052) (Clostridium acetobutylicum).